The chain runs to 142 residues: SLSVKDKAAVRALWSKISKSSDAIGNDALSRMIVVYPQTKTYFSHWPDVTPGSAHIKAHGKKVMGGIALAVSKIDDLNAGLLELSEQHAYKLRVDPANFKILNHCILVVISTMFPKDFTPEAHVSLDKFLSGVALALAERYR.

At serine 1 the chain carries N-acetylserine. Residues 1–142 enclose the Globin domain; the sequence is SLSVKDKAAV…VALALAERYR (142 aa). Residue histidine 59 coordinates O2. Residue histidine 88 coordinates heme b.

This sequence belongs to the globin family. In terms of assembly, hb 1 is a heterotetramer of two alpha-1 and two beta-1 chains. As to expression, red blood cells.

In terms of biological role, involved in oxygen transport from gills to the various peripheral tissues. This is Hemoglobin subunit alpha-1 (hba1) from Gobionotothen gibberifrons (Humped rockcod).